Reading from the N-terminus, the 446-residue chain is Phosphoglucosamine mutase (446 aa).

The active-site Phosphoserine intermediate is the Ser-103. Residues Ser-103, Asp-242, Asp-244, and Asp-246 each coordinate Mg(2+). Phosphoserine is present on Ser-103.

This sequence belongs to the phosphohexose mutase family. It depends on Mg(2+) as a cofactor. In terms of processing, activated by phosphorylation.

It carries out the reaction alpha-D-glucosamine 1-phosphate = D-glucosamine 6-phosphate. In terms of biological role, catalyzes the conversion of glucosamine-6-phosphate to glucosamine-1-phosphate. This Vibrio vulnificus (strain YJ016) protein is Phosphoglucosamine mutase.